Consider the following 228-residue polypeptide: Chromatin remodeling protein SHL (228 aa).

A BAH domain is found at 21 to 137; it reads KSIQEGDAVL…STTGAFDPDR (117 aa). The segment at 139 to 190 adopts a PHD-type zinc-finger fold; sequence TVFCKCEMPYNPDDLMVQCEECSEWFHPSCIGTTIEEAKKPDNFYCEECSPQ. A compositionally biased stretch (polar residues) spans 191-203; sequence QQNLHNSNSTSNN. The tract at residues 191–228 is disordered; sequence QQNLHNSNSTSNNRDAKVNGKRSLEVTKSKNKHTKRPG. A compositionally biased stretch (basic and acidic residues) spans 204–218; it reads RDAKVNGKRSLEVTK. Positions 210–217 match the Nuclear localization signal motif; it reads GKRSLEVT. Basic residues predominate over residues 219 to 228; sequence SKNKHTKRPG.

The protein belongs to the SHL1/EBS protein family. Recognizes di- and trimethylated histone H3 at lysine 4. Interacts with HDA6. Interacts with DEK3. In terms of tissue distribution, expressed ubiquitously. Mostly expressed in roots, stems, leaves and flowers, and, to a lower extent, in siliques.

It localises to the nucleus. In terms of biological role, chromatin remodeling factor that binds to methylated histone (e.g. H3K4me2/3) to prevent their acetylation (e.g. H3K9K14Ac), likely by recruiting histone deacetylase (HDAC) complexes, and thus regulate the transcription of target genes. Required during development and for fertility, probably by modulating developmental gene expression. Promotes development speed, but at fitness cost. Involved in the chromatin-mediated repression of floral initiation and controls genes regulating flowering. Negatively regulates the expression of the floral integrator SOC1, by preventing high levels of H3 acetylation, thus maintaining an inactive chromatin conformation. The polypeptide is Chromatin remodeling protein SHL (Arabidopsis thaliana (Mouse-ear cress)).